The chain runs to 221 residues: Cytidylate kinase (221 aa).

11–19 is a binding site for ATP; that stretch reads GPCGAGKST.

The protein belongs to the cytidylate kinase family. Type 1 subfamily.

The protein localises to the cytoplasm. The catalysed reaction is CMP + ATP = CDP + ADP. It catalyses the reaction dCMP + ATP = dCDP + ADP. This Mycoplasmopsis agalactiae (strain NCTC 10123 / CIP 59.7 / PG2) (Mycoplasma agalactiae) protein is Cytidylate kinase.